A 487-amino-acid polypeptide reads, in one-letter code: Malonate-semialdehyde dehydrogenase (487 aa).

NAD(+)-binding residues include Ala-150, Phe-152, Lys-176, Glu-179, Arg-180, Ser-229, and Thr-251. Residue Cys-284 is the Nucleophile of the active site. Glu-382 serves as a coordination point for NAD(+).

It belongs to the aldehyde dehydrogenase family. IolA subfamily. As to quaternary structure, homotetramer.

The enzyme catalyses 3-oxopropanoate + NAD(+) + CoA + H2O = hydrogencarbonate + acetyl-CoA + NADH + H(+). It catalyses the reaction 2-methyl-3-oxopropanoate + NAD(+) + CoA + H2O = propanoyl-CoA + hydrogencarbonate + NADH + H(+). It participates in polyol metabolism; myo-inositol degradation into acetyl-CoA; acetyl-CoA from myo-inositol: step 7/7. Its function is as follows. Catalyzes the oxidation of malonate semialdehyde (MSA) and methylmalonate semialdehyde (MMSA) into acetyl-CoA and propanoyl-CoA, respectively. Is involved in a myo-inositol catabolic pathway. Bicarbonate, and not CO2, is the end-product of the enzymatic reaction. In Bacillus subtilis (strain 168), this protein is Malonate-semialdehyde dehydrogenase.